A 445-amino-acid polypeptide reads, in one-letter code: Phosphoglucosamine mutase (445 aa).

Ser101 (phosphoserine intermediate) is an active-site residue. 4 residues coordinate Mg(2+): Ser101, Asp240, Asp242, and Asp244. Ser101 bears the Phosphoserine mark.

Belongs to the phosphohexose mutase family. Mg(2+) is required as a cofactor. Activated by phosphorylation.

The enzyme catalyses alpha-D-glucosamine 1-phosphate = D-glucosamine 6-phosphate. Its function is as follows. Catalyzes the conversion of glucosamine-6-phosphate to glucosamine-1-phosphate. The protein is Phosphoglucosamine mutase of Pseudomonas aeruginosa (strain LESB58).